The primary structure comprises 142 residues: Nucleoside diphosphate kinase (142 aa).

ATP contacts are provided by K11, F59, R87, T93, R104, and N114. H117 (pros-phosphohistidine intermediate) is an active-site residue.

Belongs to the NDK family. Homotetramer. Mg(2+) serves as cofactor.

It localises to the cytoplasm. It carries out the reaction a 2'-deoxyribonucleoside 5'-diphosphate + ATP = a 2'-deoxyribonucleoside 5'-triphosphate + ADP. It catalyses the reaction a ribonucleoside 5'-diphosphate + ATP = a ribonucleoside 5'-triphosphate + ADP. Functionally, major role in the synthesis of nucleoside triphosphates other than ATP. The ATP gamma phosphate is transferred to the NDP beta phosphate via a ping-pong mechanism, using a phosphorylated active-site intermediate. This Photobacterium profundum (strain SS9) protein is Nucleoside diphosphate kinase.